Consider the following 872-residue polypeptide: N-acetyltransferase eso1 (872 aa).

The segment at Met-1–Arg-591 is polymerase type-Y. The 257-residue stretch at Val-29 to Gly-285 folds into the UmuC domain. The UBZ3-type zinc finger occupies Ser-533–Lys-567. Residues Cys-540, Cys-543, His-555, and His-559 each coordinate Zn(2+). Positions Arg-569–Ser-602 are disordered. The span at Gln-583–Ser-595 shows a compositional bias: basic residues. Residues Lys-592 to Ser-872 form an acetyltransferase region. The CCHH-type zinc finger occupies Val-653 to His-677.

This sequence in the C-terminal section; belongs to the acetyltransferase family. ECO subfamily. It in the N-terminal section; belongs to the DNA polymerase type-Y family. As to quaternary structure, interacts with pds5.

It localises to the nucleus. Probable acetyltransferase required for the establishment of sister chromatid cohesion and couple the processes of cohesion and DNA replication to ensure that only sister chromatids become paired together. In contrast to the structural cohesins, the deposition and establishment factors are required only during S phase. The relevance of acetyltransferase function remains unclear. This chain is N-acetyltransferase eso1 (eso1), found in Schizosaccharomyces pombe (strain 972 / ATCC 24843) (Fission yeast).